The sequence spans 53 residues: Insulin (53 aa).

The propeptide at 1–30 (DVEPLLGFLSPKSGQENEVDDFPYKGQGEL) is c peptide. The cysteines at positions 38 and 43 are disulfide-linked.

It belongs to the insulin family. Heterodimer of a B chain and an A chain linked by two disulfide bonds.

It localises to the secreted. Functionally, insulin decreases blood glucose concentration. It increases cell permeability to monosaccharides, amino acids and fatty acids. It accelerates glycolysis, the pentose phosphate cycle, and glycogen synthesis in liver. In Anguilla anguilla (European freshwater eel), this protein is Insulin (ins).